The chain runs to 707 residues: Transcription factor 12 (707 aa).

A disordered region spans residues 25–109; it reads AMFSPPVNSG…TPFMNSNLIG (85 aa). 2 stretches are compositionally biased toward polar residues: residues 30–48 and 56–76; these read PVNSGKTRPTTLGSSQFSG and GTTSWGTSGQPSPSYDSSRGF. Ser47, Ser67, and Ser79 each carry phosphoserine. Positions 81 to 93 are enriched in basic and acidic residues; sequence HYSDHLNDSRLGT. Residue Ser98 is modified to Phosphoserine. Lys110 is covalently cross-linked (Glycyl lysine isopeptide (Lys-Gly) (interchain with G-Cter in SUMO2)). A phosphoserine mark is found at Ser116 and Ser124. Positions 119–140 are leucine-zipper; the sequence is LYSRDSGLSGCQSSLLRQDLGL. Disordered regions lie at residues 140-222 and 249-313; these read LGSP…SMFA and FGGI…ASHT. Over residues 144–163 the composition is skewed to polar residues; that stretch reads AQLSSSGKPGTPYYSFSATS. Residue Lys181 forms a Glycyl lysine isopeptide (Lys-Gly) (interchain with G-Cter in SUMO2) linkage. A compositionally biased stretch (low complexity) spans 256–269; it reads STSHMSQSSSYGSL. Over residues 282 to 306 the composition is skewed to polar residues; that stretch reads VSPTDINTSLPPMSSFHRGSTSSSP. Thr313 carries the post-translational modification Phosphothreonine. Phosphoserine is present on Ser333. Disordered stretches follow at residues 349–393 and 521–605; these read PDHT…YENS and HKTP…ERRM. Over residues 352–363 the composition is skewed to low complexity; the sequence is TSSSFPSNPSTP. Composition is skewed to polar residues over residues 364-377 and 384-393; these read VGSPSPLTAGTSQW and APSSPSYENS. Composition is skewed to basic and acidic residues over residues 543 to 555 and 561 to 576; these read IKTENKEKDENLH and DDMKSDDESSQKDIKV. Lys544 participates in a covalent cross-link: Glycyl lysine isopeptide (Lys-Gly) (interchain with G-Cter in SUMO2). At Ser565 the chain carries Phosphoserine. Residue Lys575 forms a Glycyl lysine isopeptide (Lys-Gly) (interchain with G-Cter in SUMO2) linkage. Phosphothreonine is present on Thr582. Phosphoserine is present on residues Ser583 and Ser584. Positions 593-605 are enriched in basic and acidic residues; sequence PEQKIEREKERRM. The region spanning 602-655 is the bHLH domain; it reads ERRMANNARERLRVRDINEAFKELGRMCQLHLKSEKPQTKLLILHQAVAVILSL. Residues Lys634 and Lys678 each participate in a glycyl lysine isopeptide (Lys-Gly) (interchain with G-Cter in SUMO2) cross-link. The tract at residues 657–680 is class A specific domain; that stretch reads QQVRERNLNPKAACLKRREEEKVS. The tract at residues 675 to 707 is disordered; that stretch reads EEEKVSAASAEPPTTLPGTHPGLSETTNPMGHL. Positions 686-697 are enriched in low complexity; it reads PPTTLPGTHPGL. Residues 698–707 are compositionally biased toward polar residues; the sequence is SETTNPMGHL.

As to quaternary structure, efficient DNA binding requires dimerization with another bHLH protein. Forms homo- or heterooligomers with myogenin, E12 and ITF2 proteins. Interacts with PTF1. Interacts with RUNX1T1. Interacts with NEUROD2. Interacts with BHLHA9. Isoform gamma is highly expressed in lung, kidney, spleen, and is expressed at reduced levels in heart, muscle, liver, pituitary, brain and the trigeminal ganglion. The expression of isoform alpha predominates over isoform gamma in the pituitary and the brain.

It is found in the nucleus. In terms of biological role, transcriptional regulator. Involved in the initiation of neuronal differentiation. Activates transcription by binding to the E box (5'-CANNTG-3'). May be involved in the functional network that regulates the development of the GnRH axis. This chain is Transcription factor 12 (Tcf12), found in Rattus norvegicus (Rat).